The primary structure comprises 137 residues: Large ribosomal subunit protein uL16 (137 aa).

Belongs to the universal ribosomal protein uL16 family. Part of the 50S ribosomal subunit.

Its function is as follows. Binds 23S rRNA and is also seen to make contacts with the A and possibly P site tRNAs. The protein is Large ribosomal subunit protein uL16 of Chelativorans sp. (strain BNC1).